The primary structure comprises 352 residues: Uroporphyrinogen decarboxylase (352 aa).

Residues 26-30, F45, D76, Y153, S208, and H323 each bind substrate; that span reads RQAGR.

The protein belongs to the uroporphyrinogen decarboxylase family. As to quaternary structure, homodimer.

The protein resides in the cytoplasm. It catalyses the reaction uroporphyrinogen III + 4 H(+) = coproporphyrinogen III + 4 CO2. Its pathway is porphyrin-containing compound metabolism; protoporphyrin-IX biosynthesis; coproporphyrinogen-III from 5-aminolevulinate: step 4/4. Catalyzes the decarboxylation of four acetate groups of uroporphyrinogen-III to yield coproporphyrinogen-III. The chain is Uroporphyrinogen decarboxylase from Parasynechococcus marenigrum (strain WH8102).